A 621-amino-acid chain; its full sequence is CEP295 N-terminal-like protein (621 aa).

The disordered stretch occupies residues 142 to 253; that stretch reads GGRARENEPD…RSKGADLERS (112 aa). Residues 159-170 show a composition bias toward basic residues; the sequence is RSARPPRAKEKH. Over residues 171–185 the composition is skewed to basic and acidic residues; that stretch reads RAALSEERSCREELG. Over residues 203–213 the composition is skewed to polar residues; sequence KPQTTKATGRM. A compositionally biased stretch (basic and acidic residues) spans 219-229; the sequence is PPEKRKGRPEP. Residues 328–359 adopt a coiled-coil conformation; it reads QCTLREKNKWQKELELAFEELFNINRKLKKHL. Disordered stretches follow at residues 385–421, 491–529, and 543–586; these read CGAG…ASKT, DQAD…PDMS, and REQR…DRHS. Residues 498-525 adopt a coiled-coil conformation; the sequence is STASRQRQKAEMEQRRQKQLESLEQMEH. Residues 505–529 are compositionally biased toward basic and acidic residues; the sequence is QKAEMEQRRQKQLESLEQMEHPDMS. The segment covering 568 to 578 has biased composition (polar residues); it reads ELSTTSPSGTS.

The protein localises to the cell projection. The protein resides in the cilium. This is CEP295 N-terminal-like protein from Homo sapiens (Human).